Here is a 112-residue protein sequence, read N- to C-terminus: Cytochrome c-551 (112 aa).

A signal peptide spans 1–20 (MKSKLSILMIGFALSVLLAA). The N-palmitoyl cysteine moiety is linked to residue Cys21. Residue Cys21 is the site of S-diacylglycerol cysteine attachment. A compositionally biased stretch (basic and acidic residues) spans 25-35 (DAKEEKTDTGS). Positions 25–44 (DAKEEKTDTGSKTEATASEG) are disordered. Residues 39–112 (ATASEGEELY…VIAKWLSEKK (74 aa)) form the Cytochrome c domain. Residues Cys52, Cys55, His56, and Met91 each contribute to the heme c site.

Binds 1 heme c group covalently per subunit.

It localises to the cell membrane. Its function is as follows. Electron carrier protein. The sequence is that of Cytochrome c-551 (cccB) from Bacillus subtilis (strain 168).